A 207-amino-acid chain; its full sequence is ATP-dependent Clp protease proteolytic subunit (207 aa).

Residue serine 111 is the Nucleophile of the active site. Residue histidine 136 is part of the active site.

Belongs to the peptidase S14 family. As to quaternary structure, fourteen ClpP subunits assemble into 2 heptameric rings which stack back to back to give a disk-like structure with a central cavity, resembling the structure of eukaryotic proteasomes.

It is found in the cytoplasm. The enzyme catalyses Hydrolysis of proteins to small peptides in the presence of ATP and magnesium. alpha-casein is the usual test substrate. In the absence of ATP, only oligopeptides shorter than five residues are hydrolyzed (such as succinyl-Leu-Tyr-|-NHMec, and Leu-Tyr-Leu-|-Tyr-Trp, in which cleavage of the -Tyr-|-Leu- and -Tyr-|-Trp bonds also occurs).. Cleaves peptides in various proteins in a process that requires ATP hydrolysis. Has a chymotrypsin-like activity. Plays a major role in the degradation of misfolded proteins. This Aliivibrio fischeri (strain ATCC 700601 / ES114) (Vibrio fischeri) protein is ATP-dependent Clp protease proteolytic subunit.